Reading from the N-terminus, the 323-residue chain is MKTTFLDFEQPIAELEAKIEELRFVQDDSAVDISEEISRLAGKSQQLTKDIYANLTPWQVAQIARHPQRPYTLDYVREIFTDFHELHGDRAFADDLSIVGGLARFNGQACMVIGHQKGRDTKERALRNFGMSKPEGYRKAKRLMELADKFGLPIFTFVDTPGAFPGIDAEERGQSEAIGHNLYVMAGLKVPLIATIIGEGGSGGALAIAVGDVVQMLQFATYAVISPEGCASILWKTAEKAPEAAEALGLTAHRLKALGLIDKIVSEPLGGAHRDAKGMATMLKRSLAESLRQFQGMSVKELQARRHERLMAYGKFKETGAQE.

The region spanning 39 to 293 (RLAGKSQQLT…KRSLAESLRQ (255 aa)) is the CoA carboxyltransferase C-terminal domain.

This sequence belongs to the AccA family. As to quaternary structure, acetyl-CoA carboxylase is a heterohexamer composed of biotin carboxyl carrier protein (AccB), biotin carboxylase (AccC) and two subunits each of ACCase subunit alpha (AccA) and ACCase subunit beta (AccD).

The protein resides in the cytoplasm. It catalyses the reaction N(6)-carboxybiotinyl-L-lysyl-[protein] + acetyl-CoA = N(6)-biotinyl-L-lysyl-[protein] + malonyl-CoA. It participates in lipid metabolism; malonyl-CoA biosynthesis; malonyl-CoA from acetyl-CoA: step 1/1. Its function is as follows. Component of the acetyl coenzyme A carboxylase (ACC) complex. First, biotin carboxylase catalyzes the carboxylation of biotin on its carrier protein (BCCP) and then the CO(2) group is transferred by the carboxyltransferase to acetyl-CoA to form malonyl-CoA. The chain is Acetyl-coenzyme A carboxylase carboxyl transferase subunit alpha from Cupriavidus metallidurans (strain ATCC 43123 / DSM 2839 / NBRC 102507 / CH34) (Ralstonia metallidurans).